The chain runs to 765 residues: Phosphoribosylformylglycinamidine synthase subunit PurL (765 aa).

His41 is a catalytic residue. Tyr44 and Lys83 together coordinate ATP. Glu85 is a binding site for Mg(2+). Residues 86–89 and Arg108 each bind substrate; that span reads SHNH. Catalysis depends on His87, which acts as the Proton acceptor. Asp109 serves as a coordination point for Mg(2+). Residue Gln232 participates in substrate binding. Residue Asp260 participates in Mg(2+) binding. Position 304 to 306 (304 to 306) interacts with substrate; the sequence is ESQ. Positions 503 and 540 each coordinate ATP. Position 541 (Asn541) interacts with Mg(2+). Ser543 is a binding site for substrate.

This sequence belongs to the FGAMS family. Monomer. Part of the FGAM synthase complex composed of 1 PurL, 1 PurQ and 2 PurS subunits.

The protein resides in the cytoplasm. The catalysed reaction is N(2)-formyl-N(1)-(5-phospho-beta-D-ribosyl)glycinamide + L-glutamine + ATP + H2O = 2-formamido-N(1)-(5-O-phospho-beta-D-ribosyl)acetamidine + L-glutamate + ADP + phosphate + H(+). It functions in the pathway purine metabolism; IMP biosynthesis via de novo pathway; 5-amino-1-(5-phospho-D-ribosyl)imidazole from N(2)-formyl-N(1)-(5-phospho-D-ribosyl)glycinamide: step 1/2. Part of the phosphoribosylformylglycinamidine synthase complex involved in the purines biosynthetic pathway. Catalyzes the ATP-dependent conversion of formylglycinamide ribonucleotide (FGAR) and glutamine to yield formylglycinamidine ribonucleotide (FGAM) and glutamate. The FGAM synthase complex is composed of three subunits. PurQ produces an ammonia molecule by converting glutamine to glutamate. PurL transfers the ammonia molecule to FGAR to form FGAM in an ATP-dependent manner. PurS interacts with PurQ and PurL and is thought to assist in the transfer of the ammonia molecule from PurQ to PurL. This chain is Phosphoribosylformylglycinamidine synthase subunit PurL, found in Synechococcus sp. (strain WH7803).